The following is a 421-amino-acid chain: NADH-quinone oxidoreductase subunit F 2 (421 aa).

Position 53–62 (53–62 (GRGGAGFPTG)) interacts with NAD(+). Position 165-212 (165-212 (GAGAYICGEETAMLESLEGKRAQPRLKPPFPAVAGLYASPTVINNVET)) interacts with FMN. Residues Cys342, Cys345, Cys348, and Cys388 each contribute to the [4Fe-4S] cluster site.

It belongs to the complex I 51 kDa subunit family. FMN is required as a cofactor. [4Fe-4S] cluster serves as cofactor.

It carries out the reaction a quinone + NADH + 5 H(+)(in) = a quinol + NAD(+) + 4 H(+)(out). NDH-1 shuttles electrons from NADH, via FMN and iron-sulfur (Fe-S) centers, to quinones in the respiratory chain. The immediate electron acceptor for the enzyme in this species is believed to be ubiquinone. Couples the redox reaction to proton translocation (for every two electrons transferred, four hydrogen ions are translocated across the cytoplasmic membrane), and thus conserves the redox energy in a proton gradient. This chain is NADH-quinone oxidoreductase subunit F 2 (nuoF2), found in Rhizobium meliloti (strain 1021) (Ensifer meliloti).